Reading from the N-terminus, the 334-residue chain is RNA polymerase sigma factor RpoS (334 aa).

A disordered region spans residues 21–50; sequence PGIMLDESSADEQPSPRATPKATTSFSSKQ. Residues 61–94 are sigma-70 factor domain-1; that stretch reads DATQLYLNEIGFSPLLTPEEEVHFARLAQKGDPA. Residues 99 to 169 are sigma-70 factor domain-2; that stretch reads MIESNLRLVV…ERAIMNQTRT (71 aa). The Interaction with polymerase core subunit RpoC motif lies at 123–126; the sequence is DLIE. The interval 179 to 254 is sigma-70 factor domain-3; the sequence is ELNVYLRAAR…DDRPTDPCEL (76 aa). The segment at 267–320 is sigma-70 factor domain-4; it reads WLTELTDKQREVVIRRFGLRGHESSTLEEVGQEIGLTRERVRQIQVEALKRLRE. Residues 293–312 constitute a DNA-binding region (H-T-H motif); the sequence is LEEVGQEIGLTRERVRQIQV.

The protein belongs to the sigma-70 factor family. RpoS subfamily. As to quaternary structure, interacts with the RNA polymerase core enzyme.

Its subcellular location is the cytoplasm. Functionally, sigma factors are initiation factors that promote the attachment of RNA polymerase to specific initiation sites and are then released. This sigma factor is the master transcriptional regulator of the stationary phase and the general stress response. This chain is RNA polymerase sigma factor RpoS, found in Pseudomonas aeruginosa (strain ATCC 15692 / DSM 22644 / CIP 104116 / JCM 14847 / LMG 12228 / 1C / PRS 101 / PAO1).